A 188-amino-acid polypeptide reads, in one-letter code: Probable DNA-directed RNA polymerase subunit delta (188 aa).

The HTH HARE-type domain occupies 14 to 83 (LSMIEVARAI…GDNKWGLRSW (70 aa)). Residues 117–188 (GDEDAIDYSD…EDDEDDEEEE (72 aa)) form a disordered region.

Belongs to the RpoE family. In terms of assembly, RNAP is composed of a core of 2 alpha, a beta and a beta' subunits. The core is associated with a delta subunit and one of several sigma factors.

Functionally, participates in both the initiation and recycling phases of transcription. In the presence of the delta subunit, RNAP displays an increased specificity of transcription, a decreased affinity for nucleic acids, and an increased efficiency of RNA synthesis because of enhanced recycling. This chain is Probable DNA-directed RNA polymerase subunit delta, found in Streptococcus uberis (strain ATCC BAA-854 / 0140J).